We begin with the raw amino-acid sequence, 185 residues long: uncharacterized protein (185 aa).

It belongs to the EUO family.

This is an uncharacterized protein from Chlamydia muridarum (strain MoPn / Nigg).